A 97-amino-acid polypeptide reads, in one-letter code: Aspartyl/glutamyl-tRNA(Asn/Gln) amidotransferase subunit C (97 aa).

It belongs to the GatC family. Heterotrimer of A, B and C subunits.

It catalyses the reaction L-glutamyl-tRNA(Gln) + L-glutamine + ATP + H2O = L-glutaminyl-tRNA(Gln) + L-glutamate + ADP + phosphate + H(+). It carries out the reaction L-aspartyl-tRNA(Asn) + L-glutamine + ATP + H2O = L-asparaginyl-tRNA(Asn) + L-glutamate + ADP + phosphate + 2 H(+). Allows the formation of correctly charged Asn-tRNA(Asn) or Gln-tRNA(Gln) through the transamidation of misacylated Asp-tRNA(Asn) or Glu-tRNA(Gln) in organisms which lack either or both of asparaginyl-tRNA or glutaminyl-tRNA synthetases. The reaction takes place in the presence of glutamine and ATP through an activated phospho-Asp-tRNA(Asn) or phospho-Glu-tRNA(Gln). The chain is Aspartyl/glutamyl-tRNA(Asn/Gln) amidotransferase subunit C from Synechococcus sp. (strain JA-2-3B'a(2-13)) (Cyanobacteria bacterium Yellowstone B-Prime).